An 864-amino-acid polypeptide reads, in one-letter code: Leucine--tRNA ligase (864 aa).

Positions P42 to H52 match the 'HIGH' region motif. Residues K624–S628 carry the 'KMSKS' region motif. K627 provides a ligand contact to ATP.

This sequence belongs to the class-I aminoacyl-tRNA synthetase family.

The protein resides in the cytoplasm. The enzyme catalyses tRNA(Leu) + L-leucine + ATP = L-leucyl-tRNA(Leu) + AMP + diphosphate. The chain is Leucine--tRNA ligase from Burkholderia pseudomallei (strain 1710b).